We begin with the raw amino-acid sequence, 257 residues long: Hydroxyacylglutathione hydrolase (257 aa).

Zn(2+) contacts are provided by His56, His58, Asp60, His61, His112, Asp131, and His169.

The protein belongs to the metallo-beta-lactamase superfamily. Glyoxalase II family. As to quaternary structure, monomer. Zn(2+) serves as cofactor.

The enzyme catalyses an S-(2-hydroxyacyl)glutathione + H2O = a 2-hydroxy carboxylate + glutathione + H(+). It functions in the pathway secondary metabolite metabolism; methylglyoxal degradation; (R)-lactate from methylglyoxal: step 2/2. Thiolesterase that catalyzes the hydrolysis of S-D-lactoyl-glutathione to form glutathione and D-lactic acid. This chain is Hydroxyacylglutathione hydrolase, found in Ectopseudomonas mendocina (strain ymp) (Pseudomonas mendocina).